Reading from the N-terminus, the 566-residue chain is MESQRNLLLLALLFVSFLLYTAWVEEKTPQVAPQVQTEQVDSSVPASVASSANSANLSDGVPNSPQQSSTDATSTELPASQSVTIANDELRLTISLVGGDIIKADLLQHDATLDSDTPYRLLDSGNGFTYIAQSGLIGQGPDANKNGRPLYDTTDTESVLADGQAEVSTMLHFVDADGNIFIKTFTLKRGEYVTNVAYQIENKTDSPLNVQLYAQLRETLSDDSGSMVMPVYRGGAFSTTETRYEKYSFSDMQDGPLQKTTEGGWVAMLQHYFVSAWIPSPTDQNVLYSNIIQDKEAAIGFKAPSKTIAPQSVAELETNLWVGPKIQEEMALVAKNLDLTVDYGWLWFIAQPLFKLLLFFQGIVGNWGVAIILITFTVKGALYPLTKAQYTSMAKMRLLQPKIKELREQFGEDRQKVSKAMMELYKKEKVNPLGGCFPILLQMPIFIALYWSLMESVELRHAPFMLWIQDLSVQDPYYILPILMGVSMFFIQKMSPTTVQDPMQQKVMQFMPVIFTFFFLWFPAGLVLYWLMSNVVTLIQQTLIYRSFEKKGLHQKEKEPVVLTKK.

The helical transmembrane segment at 6–26 (NLLLLALLFVSFLLYTAWVEE) threads the bilayer. Residues 30–80 (QVAPQVQTEQVDSSVPASVASSANSANLSDGVPNSPQQSSTDATSTELPAS) are disordered. The segment covering 31–41 (VAPQVQTEQVD) has biased composition (polar residues). The segment covering 42–58 (SSVPASVASSANSANLS) has biased composition (low complexity). A compositionally biased stretch (polar residues) spans 61-80 (VPNSPQQSSTDATSTELPAS). A run of 4 helical transmembrane segments spans residues 356-376 (LLLF…LITF), 433-453 (LGGC…YWSL), 471-491 (LSVQ…MFFI), and 510-530 (FMPV…VLYW).

The protein belongs to the OXA1/ALB3/YidC family. Type 1 subfamily. As to quaternary structure, interacts with the Sec translocase complex via SecD. Specifically interacts with transmembrane segments of nascent integral membrane proteins during membrane integration.

It is found in the cell inner membrane. Required for the insertion and/or proper folding and/or complex formation of integral membrane proteins into the membrane. Involved in integration of membrane proteins that insert both dependently and independently of the Sec translocase complex, as well as at least some lipoproteins. Aids folding of multispanning membrane proteins. This Psychromonas ingrahamii (strain DSM 17664 / CCUG 51855 / 37) protein is Membrane protein insertase YidC.